The primary structure comprises 503 residues: 11-hydroxysugiol 20-monooxygenase (503 aa).

The chain crosses the membrane as a helical span at residues 2–22 (QVLIVASLAFLAAWLVYSRWS). Cys446 lines the heme pocket.

Belongs to the cytochrome P450 family. Heme serves as cofactor. Highly expressed in roots.

Its subcellular location is the membrane. It carries out the reaction 11-hydroxysugiol + reduced [NADPH--hemoprotein reductase] + O2 = 11,20-dihydroxysugiol + oxidized [NADPH--hemoprotein reductase] + H2O + H(+). The enzyme catalyses 11-hydroxyferruginol + reduced [NADPH--hemoprotein reductase] + O2 = 11,20-dihydroxyferruginol + oxidized [NADPH--hemoprotein reductase] + H2O + H(+). The protein operates within secondary metabolite biosynthesis; terpenoid biosynthesis. Monooxygenase that oxidizes 11-hydroxysugiol to produce 11,20-dihydroxysugiol. Can oxidize 11-hydroxyferruginol to produce 11,20-dihydroxyferruginol. These products are intermediates in tanshinone biosynthesis. This is 11-hydroxysugiol 20-monooxygenase from Salvia miltiorrhiza (Chinese sage).